Reading from the N-terminus, the 67-residue chain is Small ribosomal subunit protein eS27 (67 aa).

Residues Cys-22, Cys-25, Cys-41, and Cys-44 each coordinate Zn(2+). The C4-type zinc finger occupies Cys-22–Cys-44.

Belongs to the eukaryotic ribosomal protein eS27 family. As to quaternary structure, part of the 30S ribosomal subunit. Zn(2+) is required as a cofactor.

In Pyrobaculum aerophilum (strain ATCC 51768 / DSM 7523 / JCM 9630 / CIP 104966 / NBRC 100827 / IM2), this protein is Small ribosomal subunit protein eS27.